We begin with the raw amino-acid sequence, 668 residues long: Probable ATP-dependent RNA helicase ddx52 (668 aa).

Residues lysine 37–isoleucine 174 are disordered. Positions lysine 40–valine 57 are enriched in polar residues. The span at serine 59–glutamate 69 shows a compositional bias: basic and acidic residues. Positions glutamate 70–glutamate 108 are enriched in acidic residues. Residues proline 109–asparagine 120 show a composition bias toward basic and acidic residues. The span at glutamate 138–aspartate 147 shows a compositional bias: acidic residues. Residues valine 161 to isoleucine 174 are compositionally biased toward basic and acidic residues. Residues glutamine 199–methionine 227 carry the Q motif motif. The Helicase ATP-binding domain maps to isoleucine 230–isoleucine 402. Residue alanine 243 to threonine 250 coordinates ATP. A DEAD box motif is present at residues aspartate 349 to aspartate 352. The Helicase C-terminal domain maps to threonine 413–lysine 574. The interval arginine 601–isoleucine 668 is disordered. Positions serine 604–lysine 613 are enriched in basic residues. Over residues serine 624–asparagine 636 the composition is skewed to low complexity. The span at lysine 659 to isoleucine 668 shows a compositional bias: basic residues.

Belongs to the DEAD box helicase family. DDX52/ROK1 subfamily.

Its subcellular location is the nucleus. It is found in the nucleolus. It carries out the reaction ATP + H2O = ADP + phosphate + H(+). In terms of biological role, ATP-binding RNA helicase which may be involved in the ribosome biogenesis. This chain is Probable ATP-dependent RNA helicase ddx52 (ddx52), found in Dictyostelium discoideum (Social amoeba).